The chain runs to 149 residues: Nucleoside diphosphate kinase (149 aa).

The ATP site is built by Lys-9, Phe-57, Arg-85, Thr-91, Arg-102, and Asn-112. The active-site Pros-phosphohistidine intermediate is His-115.

This sequence belongs to the NDK family. Homotetramer. Mg(2+) serves as cofactor.

It is found in the cytoplasm. The catalysed reaction is a 2'-deoxyribonucleoside 5'-diphosphate + ATP = a 2'-deoxyribonucleoside 5'-triphosphate + ADP. It carries out the reaction a ribonucleoside 5'-diphosphate + ATP = a ribonucleoside 5'-triphosphate + ADP. Functionally, major role in the synthesis of nucleoside triphosphates other than ATP. The ATP gamma phosphate is transferred to the NDP beta phosphate via a ping-pong mechanism, using a phosphorylated active-site intermediate. This is Nucleoside diphosphate kinase from Microcystis aeruginosa (strain NIES-843 / IAM M-2473).